A 1115-amino-acid chain; its full sequence is MFYPVKVGTRERWSYSRIREVLDMPNLIEIQQNSYQWFLDEGLREMFRDISPIQDFTGNLVLEFIDYSLGEPKYEVEECKERDVTYAAPLRVKVRLINKETGEVKEQEVFMGDFPLMTTKGTFIINGAERVIVSQLVRSPGVYYSESIDPSGKKVFGATVIPNRGAWLEFETDVNDNIFVRVDRTRKLPATVLIRALGYATNGQIAELFDDNEHIRITLERDNTESAEEALVEIYKRLRPGEPPTVDSARSLLEALFFDPKRYDLAKVGRYKLNKKLNLSVPTDVHHLTKEDIVASLRQMLTLMSGEGHKDDIDHLGNRRLRSVGELLQNQFRIGLSRMERVVRERMTIQDVDVITPQVLINIRPVVAAIKEFFGSSQLSQFMDQTNPLAELTHKRRLSALGPGGLSRERAGFEVRDVHHSHYGRMCPIETPEGPNIGLIGSLSTYGRINPYGFIEAPYRKVNNGQVTDQIDYLTADEEEKFVVAQANAPLTDDGHFIEEKIDGRHGPDFVLVAPERIDYMDVSPKQMVSIATALIPFLEHDDANRALMGANMQRQAVPLLRTDAPYVGTGMEYKAAKDSGVCVLASKDGTVERATAEDIIIRHDDGTLEKHKLLKYLRSNQGTCINQRPIVMKNERVEAGQIIADGPSTDHGELALGRNVLIAFMTWEGYNYEDAILISEKLVKEDYYTSIHIEEYEADARDTKLGPEEITRDIPNVGEDVLKDLDERGIIRIGAEVSTGDILVGKVTPKGETELTAEERLLRAIFGEKAREVRDTSLRVPHGEAGKIVDVKVFTRENGDELAPGVNELVRVYIAQKRKISVGDKMAGRHGNKGVISRIMKQEDMPFLPDGTPVEIVLNPLGVPSRMNIGQVMETHLGWAAKALGLRLATPVFDGAQEEDVFATLRKAGLPETGKTVLYDGRTGDPFDNKITVGYMYFLKLHHLVDDKIHARSTGPYSLVTQQPLGGKAQFGGQRFGEMEVWALEAYGAAYTLQEILTVKSDDVVGRVKTYEAIVKGENIPEPGVPESFKVLIKELQSLGLDVRVLSENDEEIEIREIDEDVTETAKELGIDLHEDLPAPVIHEAGEGEDDEYFEEDEEAVDDEPMTFDDDDME.

The disordered stretch occupies residues 1084–1115 (HEAGEGEDDEYFEEDEEAVDDEPMTFDDDDME). The segment covering 1088 to 1115 (EGEDDEYFEEDEEAVDDEPMTFDDDDME) has biased composition (acidic residues).

This sequence belongs to the RNA polymerase beta chain family. As to quaternary structure, the RNAP catalytic core consists of 2 alpha, 1 beta, 1 beta' and 1 omega subunit. When a sigma factor is associated with the core the holoenzyme is formed, which can initiate transcription.

It carries out the reaction RNA(n) + a ribonucleoside 5'-triphosphate = RNA(n+1) + diphosphate. DNA-dependent RNA polymerase catalyzes the transcription of DNA into RNA using the four ribonucleoside triphosphates as substrates. The polypeptide is DNA-directed RNA polymerase subunit beta (Desulfitobacterium hafniense (strain Y51)).